The primary structure comprises 215 residues: Large ribosomal subunit protein uL3c (215 aa).

Positions 132 to 151 (RGAMSHGSKSHRRPGSIGAG) are disordered.

This sequence belongs to the universal ribosomal protein uL3 family. In terms of assembly, part of the 50S ribosomal subunit.

It is found in the plastid. The protein resides in the chloroplast. Functionally, one of the primary rRNA binding proteins, it binds directly near the 3'-end of the 23S rRNA, where it nucleates assembly of the 50S subunit. The chain is Large ribosomal subunit protein uL3c (rpl3) from Cyanidium caldarium (Red alga).